The primary structure comprises 417 residues: Echinulin prenyltransferase 1 (417 aa).

Residues Arg90, Lys179, Tyr181, Lys248, Tyr250, Tyr333, Tyr398, and Tyr402 each coordinate dimethylallyl diphosphate.

It belongs to the tryptophan dimethylallyltransferase family.

The catalysed reaction is cyclo(L-tryptophyl-L-alanyl) + dimethylallyl diphosphate = preechinulin + diphosphate. Its pathway is secondary metabolite biosynthesis. It functions in the pathway alkaloid biosynthesis. Functionally, prenyltransferase; part of the gene cluster that mediates the biosynthesis of echinulin family alkaloid. The pathway begins with the biosynthesis of the cyclic dipeptide cyclo-L-Trp-L-Ala (cyclo-TA) by the NRPS echPS via condensation of L-alanine and L-tryptophan. The prenyltransferase echPT1 then catalyzes the first prenylation step, a reverse prenylation reaction at C2, to yield preechinulin. Preechinulin is the substrate of the cytochrome P450 monooxygenase echP450 that catalyzes the formation of the double bond between C10 and C11 to produce neoechulin A. The unique prenyltransferase echPT2 functions as a competitive enzyme with echP450 for preechinulin metabolization and uses preechinulin for effective regiospecific prenylations. Preechinulin is prenylated by echPT2 at C5 or C7. C7-prenylation leads to accumulation of tardioxopiperazine B without further modification by echPT2. In contrast, the C5-prenylated tardioxopiperazine A can be prenylated again by echPT2, predominantly at C7 to form echinulin or less frequently at C4 to give variecolorin L. EchPT2 also accepts neoechilunin A to produce varlecolorin G (prenylation at C5) or isoechinulin A (prenylation at C7). EchPT2 further converts isoechinulin A into dehydroechinulin. Moreover, a yet unidentified enzyme can also convert neoechilunin A into neoechilunin B by introducing a double bond between positions C14 and C17 and thus provides a further substrate to echPT2 for C5 and C7 prenylation. The polypeptide is Echinulin prenyltransferase 1 (Aspergillus ruber (Eurotium rubrum)).